We begin with the raw amino-acid sequence, 1442 residues long: MVIILAMTNREKFKVLADQIKISNQLEQDILEQGELTRIDVSNKNRTWTFQISLPHFLSHEDYLLFTHAIEEEFKEIATVAIDFSIKDTNNQDEFALKYFGHCIDQTRLSPKVKGQLKQKKLIMSGNVLKVLVSNDIERNHFDKACNGSLVKAFRQCGFEIDKVVFETDSTNHDDDLASLEAHIQQEDEQSAREATEKLEKMKAEKAKQQDNNESTVEKCQIGKPIQIENIKPIESIIEEEFKVAIEGVIFDINLKELKSGRHIVELKVTDYTDSLVLKMFTRKNKDDLDHFKALSVGKWVRAQGRIEEDTFVRDLVMMMSDIEEIKKTPKQDKAEDKRVEFHLHTSMSQMDGIPNISAYVEQAAKWGHQALAVTDHNVVQAFPDAHNAAEKHGIKMIYGMEGMLVDDGVPIAYKPTDRNLKDATYVVFDVETTGLSNQYDKIIELAAVKVHNGEIIDKFERFSNPHERLSETIINLTHITDDMLTDAPEIEEVLTEFKEWVGDAIFVAHNASFDMGFIDTGYERLGFGPSTNGVIDTLELSRTINTEYGKHGLNFLAKKYGVELTQHHRAIYDTEATAYIFIKMVQQMKELGVNNHLEINKKLTNEDAYKRARPSHVTLIVQNQEGLKNLFKIVSASLVKYYYRTPRIPRSLLNEYREGILIGTACDEGELFTAVMQKDQSEVEKIAKFYDFIEVQPPALYQDLMDRELIRDNETLTQIYKRLIDAGKSANIPVIATGNAHYLYEHDAIARKILIASQPGNPLNRSTLPEAHFRTTDEMLDDFHFLGEEKAYEIVVTNTNELANKIEKVVPIKDKLFTPRMDGANEEIRELSYSNAKKLYGEDLPQIVIDRLEKELDSIIGNGFSVIYLISQRLVKKSLDDGYLVGSRGSVGSSFVATMTEITEVNPLPPHYICSHCKTSEFFDDGSVGSGFDLPDKKCPTCGNELIKEGQDIPFETFLGFKGDKVPDIDLNFSGEYQPNAHNYTKVLFGEDKVFRAGTIGTVAEKTAFGFVKGYLNDQGIHKRGAEIDRLVKGCTGVKRTTGQHPGGIIVVPDYMDIYDFTPIQFPADDQSAAWMTTHFDFHSIHDNVLKLDILGHDDPTMIRMLQDLSGIDPKTIPVDDKETMQIFSGPESLGVTEDEILCKTGTFGVPEFGTGFVRQMLEDTKPTTFSELVQISGLSHGTDVWLGNAQELIRQGICDLSSVIGCRDDIMVYLMYAGLEPSMAFKTMEFVRKGRGLTDEMVEAMKENNVPDWYLDSCRKIKYMFPKAHAAAYVLMAVRIAYFKVHHPLYYYAAYFTIRASDFDLITMIKDKTSIRNTVKDMYSRYMDLGKKEKDVLTVLEIMNEMAHRGFRLQPISLEKSQAFDFIIEGDTLIPPFISVPGLGENVAQRIVEAREEGPFLSKEDLNKKAGLSQKVIDYLDELGSLPDLPDKAQLSIFDM.

The region spanning 426–582 is the Exonuclease domain; it reads YVVFDVETTG…YDTEATAYIF (157 aa).

Belongs to the DNA polymerase type-C family. PolC subfamily.

The protein localises to the cytoplasm. The catalysed reaction is DNA(n) + a 2'-deoxyribonucleoside 5'-triphosphate = DNA(n+1) + diphosphate. Required for replicative DNA synthesis. This DNA polymerase also exhibits 3' to 5' exonuclease activity. The polypeptide is DNA polymerase III PolC-type (Staphylococcus epidermidis (strain ATCC 12228 / FDA PCI 1200)).